Consider the following 422-residue polypeptide: Dihydrolipoyllysine-residue succinyltransferase component of 2-oxoglutarate dehydrogenase complex (422 aa).

The region spanning 1 to 76 (MPEVKVPELA…EVGQAIAVIG (76 aa)) is the Lipoyl-binding domain. Lys42 carries the post-translational modification N6-lipoyllysine. Residues 77–184 (EGSGNASKEN…APAKEEKKYN (108 aa)) are disordered. 2 stretches are compositionally biased toward polar residues: residues 80 to 94 (GNAS…TPQQ) and 114 to 130 (EVNQ…NATP). One can recognise a Peripheral subunit-binding (PSBD) domain in the interval 127 to 163 (NATPSARRYARENGVNLAEVSPKTNDVVRKEDIDKKQ). Positions 152–163 (DVVRKEDIDKKQ) are enriched in basic and acidic residues. Positions 164–176 (QAPASTQTTQQAP) are enriched in low complexity. Residues His393 and Asp397 contribute to the active site.

It belongs to the 2-oxoacid dehydrogenase family. As to quaternary structure, forms a 24-polypeptide structural core with octahedral symmetry. Part of the 2-oxoglutarate dehydrogenase (OGDH) complex composed of E1 (2-oxoglutarate dehydrogenase), E2 (dihydrolipoamide succinyltransferase) and E3 (dihydrolipoamide dehydrogenase); the complex contains multiple copies of the three enzymatic components (E1, E2 and E3). (R)-lipoate serves as cofactor.

The enzyme catalyses N(6)-[(R)-dihydrolipoyl]-L-lysyl-[protein] + succinyl-CoA = N(6)-[(R)-S(8)-succinyldihydrolipoyl]-L-lysyl-[protein] + CoA. It functions in the pathway amino-acid degradation; L-lysine degradation via saccharopine pathway; glutaryl-CoA from L-lysine: step 6/6. In terms of biological role, E2 component of the 2-oxoglutarate dehydrogenase (OGDH) complex which catalyzes the second step in the conversion of 2-oxoglutarate to succinyl-CoA and CO(2). The sequence is that of Dihydrolipoyllysine-residue succinyltransferase component of 2-oxoglutarate dehydrogenase complex (odhB) from Staphylococcus aureus (strain bovine RF122 / ET3-1).